Reading from the N-terminus, the 662-residue chain is Transketolase (662 aa).

H28 serves as a coordination point for substrate. Thiamine diphosphate contacts are provided by residues H68 and 115 to 117 (GPL). A Mg(2+)-binding site is contributed by D156. The thiamine diphosphate site is built by G157 and N186. The Mg(2+) site is built by N186 and I188. The substrate site is built by H261, R356, and S383. Residue H261 participates in thiamine diphosphate binding. Catalysis depends on E410, which acts as the Proton donor. Thiamine diphosphate is bound at residue F436. H460, D468, and R519 together coordinate substrate.

It belongs to the transketolase family. As to quaternary structure, homodimer. The cofactor is Mg(2+). Ca(2+) is required as a cofactor. Mn(2+) serves as cofactor. Requires Co(2+) as cofactor. It depends on thiamine diphosphate as a cofactor.

The enzyme catalyses D-sedoheptulose 7-phosphate + D-glyceraldehyde 3-phosphate = aldehydo-D-ribose 5-phosphate + D-xylulose 5-phosphate. It participates in carbohydrate biosynthesis; Calvin cycle. The protein operates within carbohydrate degradation; pentose phosphate pathway. Its function is as follows. Catalyzes the transfer of a two-carbon ketol group from a ketose donor to an aldose acceptor, via a covalent intermediate with the cofactor thiamine pyrophosphate. This Staphylococcus aureus (strain MRSA252) protein is Transketolase (tkt).